The following is a 677-amino-acid chain: UvrABC system protein B (677 aa).

A Helicase ATP-binding domain is found at 25–412 (DGVNSGREYQ…SGAIIEQVIR (388 aa)). 38–45 (GATGTGKT) lines the ATP pocket. Positions 91–114 (YYDYYQPEAYVPVSDTYIAKTSSI) match the Beta-hairpin motif. Residues 429–591 (QVEDLLDEIR…IVPMPAGKKA (163 aa)) form the Helicase C-terminal domain. The region spanning 639-674 (PQLIDELETKMKKSAKDLDFENAAKLRDKIHQLRKK) is the UVR domain.

The protein belongs to the UvrB family. As to quaternary structure, forms a heterotetramer with UvrA during the search for lesions. Interacts with UvrC in an incision complex.

It is found in the cytoplasm. Its function is as follows. The UvrABC repair system catalyzes the recognition and processing of DNA lesions. A damage recognition complex composed of 2 UvrA and 2 UvrB subunits scans DNA for abnormalities. Upon binding of the UvrA(2)B(2) complex to a putative damaged site, the DNA wraps around one UvrB monomer. DNA wrap is dependent on ATP binding by UvrB and probably causes local melting of the DNA helix, facilitating insertion of UvrB beta-hairpin between the DNA strands. Then UvrB probes one DNA strand for the presence of a lesion. If a lesion is found the UvrA subunits dissociate and the UvrB-DNA preincision complex is formed. This complex is subsequently bound by UvrC and the second UvrB is released. If no lesion is found, the DNA wraps around the other UvrB subunit that will check the other stand for damage. In Prochlorococcus marinus (strain SARG / CCMP1375 / SS120), this protein is UvrABC system protein B.